The following is a 443-amino-acid chain: Glutamate--tRNA ligase 2 (443 aa).

The short motif at 7 to 17 is the 'HIGH' region element; that stretch reads PSPTGLIHVGN. The 'KMSKS' region motif lies at 240 to 244; sequence KLSKR. Lysine 243 lines the ATP pocket.

The protein belongs to the class-I aminoacyl-tRNA synthetase family. Glutamate--tRNA ligase type 1 subfamily. Monomer.

The protein resides in the cytoplasm. The catalysed reaction is tRNA(Glu) + L-glutamate + ATP = L-glutamyl-tRNA(Glu) + AMP + diphosphate. Functionally, catalyzes the attachment of glutamate to tRNA(Glu) in a two-step reaction: glutamate is first activated by ATP to form Glu-AMP and then transferred to the acceptor end of tRNA(Glu). The protein is Glutamate--tRNA ligase 2 of Gluconacetobacter diazotrophicus (strain ATCC 49037 / DSM 5601 / CCUG 37298 / CIP 103539 / LMG 7603 / PAl5).